The primary structure comprises 95 residues: Small ribosomal subunit protein uS19 (95 aa).

Belongs to the universal ribosomal protein uS19 family.

Functionally, protein S19 forms a complex with S13 that binds strongly to the 16S ribosomal RNA. The protein is Small ribosomal subunit protein uS19 of Thermotoga sp. (strain RQ2).